The primary structure comprises 292 residues: UPF0696 protein C11orf68 homolog (292 aa).

Low complexity predominate over residues 1 to 10 (MAAAAAAVAG). The tract at residues 1–60 (MAAAAAAVAGAGRGGGGGADPGQERSRARSWVGAERSEGRRMEPNEELEEEDSPGGREDG) is disordered. Gly residues predominate over residues 11–20 (AGRGGGGGAD). The segment covering 35 to 44 (ERSEGRRMEP) has biased composition (basic and acidic residues).

It belongs to the UPF0696 family.

This chain is UPF0696 protein C11orf68 homolog (Bles03), found in Rattus norvegicus (Rat).